The chain runs to 345 residues: Phenylalanine--tRNA ligase alpha subunit (345 aa).

E253 contacts Mg(2+).

This sequence belongs to the class-II aminoacyl-tRNA synthetase family. Phe-tRNA synthetase alpha subunit type 1 subfamily. Tetramer of two alpha and two beta subunits. Requires Mg(2+) as cofactor.

Its subcellular location is the cytoplasm. It carries out the reaction tRNA(Phe) + L-phenylalanine + ATP = L-phenylalanyl-tRNA(Phe) + AMP + diphosphate + H(+). In Nitratidesulfovibrio vulgaris (strain DP4) (Desulfovibrio vulgaris), this protein is Phenylalanine--tRNA ligase alpha subunit.